Here is a 567-residue protein sequence, read N- to C-terminus: Hexose transporter HXT9 (567 aa).

The span at 1–16 shows a compositional bias: polar residues; it reads MSGVNNTSANDLSTTE. The tract at residues 1-45 is disordered; that stretch reads MSGVNNTSANDLSTTESNSNSVANAPSVKTEHNDSKNSLNLDATE. Over 1 to 56 the chain is Cytoplasmic; that stretch reads MSGVNNTSANDLSTTESNSNSVANAPSVKTEHNDSKNSLNLDATEPPIDLPQKPLS. The span at 17-28 shows a compositional bias: low complexity; the sequence is SNSNSVANAPSV. Residues 57 to 77 form a helical membrane-spanning segment; it reads AYTTVAILCLMIAFGGFIFGW. Residues 78–112 lie on the Extracellular side of the membrane; it reads DTGTISGFVNLSDFIRRFGQKNDKGTYYLSKVRMG. Residue Asn87 is glycosylated (N-linked (GlcNAc...) asparagine). A helical membrane pass occupies residues 113-133; the sequence is LIVSIFNIGCAIGGIVLSKVG. At 134-139 the chain is on the cytoplasmic side; it reads DIYGRR. Residues 140 to 160 form a helical membrane-spanning segment; sequence IGLITVTAIYVVGILIQITSI. Topologically, residues 161–170 are extracellular; the sequence is NKWYQYFIGR. The helical transmembrane segment at 171-191 threads the bilayer; that stretch reads IISGLGVGGIAVLSPMLISEV. The Cytoplasmic segment spans residues 192–197; that stretch reads APKQIR. Residues 198–218 form a helical membrane-spanning segment; that stretch reads GTLVQLYQLMCTMGIFLGYCT. Topologically, residues 219–232 are extracellular; that stretch reads NYGTKNYHNATQWR. Asn227 carries N-linked (GlcNAc...) asparagine glycosylation. The helical transmembrane segment at 233–253 threads the bilayer; that stretch reads VGLGLCFAWTTFMVSGMMFVP. Residues 254-336 lie on the Cytoplasmic side of the membrane; it reads ESPRYLIEVG…IQSLQQLTGD (83 aa). Residues 337 to 353 form a helical membrane-spanning segment; that stretch reads NYFFYYGTTIFKSVGLK. Over 354–359 the chain is Extracellular; it reads DSFQTS. The helical transmembrane segment at 360–377 threads the bilayer; the sequence is IIIGVVNFFSSFIAVYTI. Residues 378-384 are Cytoplasmic-facing; sequence ERFGRRT. Residues 385–405 traverse the membrane as a helical segment; sequence CLLWGAASMLCCFAVFASVGV. The Extracellular portion of the chain corresponds to 406–429; it reads TKLWPQGSSHQDITSQGAGNCMIV. The helical transmembrane segment at 430 to 450 threads the bilayer; that stretch reads FTMFFIFSFATTWAGGCYVIV. Residues 451–467 lie on the Cytoplasmic side of the membrane; sequence SETFPLRVKSRGMAIAT. A helical transmembrane segment spans residues 468 to 488; it reads AANWMWGFLISFFTPFITGAI. Asn489 is a topological domain (extracellular). Residues 490 to 510 form a helical membrane-spanning segment; sequence FYYGYVFLGCLVFAYFYVFFF. The Cytoplasmic portion of the chain corresponds to 511–567; it reads VPETKGLTLEEVNTMWLEGVPAWKSASWVPPERRTADYDADAIDHDDRPIYKRFFSS.

It belongs to the major facilitator superfamily. Sugar transporter (TC 2.A.1.1) family.

The protein resides in the membrane. Functionally, probable glucose transporter. The protein is Hexose transporter HXT9 (HXT9) of Saccharomyces cerevisiae (strain ATCC 204508 / S288c) (Baker's yeast).